The primary structure comprises 481 residues: UDP-N-acetylmuramoyl-L-alanyl-D-glutamate--L-lysine ligase (481 aa).

Ser-42 provides a ligand contact to UDP-N-acetyl-alpha-D-muramoyl-L-alanyl-D-glutamate. 118–124 provides a ligand contact to ATP; that stretch reads GTKGKTT. UDP-N-acetyl-alpha-D-muramoyl-L-alanyl-D-glutamate-binding positions include Gln-158, 160 to 161, Ser-187, and Arg-195; that span reads TT. Lys-229 carries the N6-carboxylysine modification. Positions 404–407 match the L-lysine recognition motif motif; it reads DDPN.

This sequence belongs to the MurCDEF family. MurE subfamily. In terms of processing, carboxylation is probably crucial for Mg(2+) binding and, consequently, for the gamma-phosphate positioning of ATP.

It is found in the cytoplasm. The catalysed reaction is UDP-N-acetyl-alpha-D-muramoyl-L-alanyl-D-glutamate + L-lysine + ATP = UDP-N-acetyl-alpha-D-muramoyl-L-alanyl-gamma-D-glutamyl-L-lysine + ADP + phosphate + H(+). Its pathway is cell wall biogenesis; peptidoglycan biosynthesis. Catalyzes the addition of L-lysine to the nucleotide precursor UDP-N-acetylmuramoyl-L-alanyl-D-glutamate (UMAG) in the biosynthesis of bacterial cell-wall peptidoglycan. The protein is UDP-N-acetylmuramoyl-L-alanyl-D-glutamate--L-lysine ligase of Streptococcus pyogenes serotype M4 (strain MGAS10750).